The primary structure comprises 332 residues: Leucine carboxyl methyltransferase 1 (332 aa).

The interval 1–23 (MAASLRRPSFTTCSSPTDTDDEG) is disordered. Residues Arg-71, Gly-96, Asp-120, 169–170 (DL), and Glu-196 each bind S-adenosyl-L-methionine.

The protein belongs to the methyltransferase superfamily. LCMT family.

It carries out the reaction [phosphatase 2A protein]-C-terminal L-leucine + S-adenosyl-L-methionine = [phosphatase 2A protein]-C-terminal L-leucine methyl ester + S-adenosyl-L-homocysteine. Functionally, methylates the carboxyl group of the C-terminal leucine residue of protein phosphatase 2A catalytic subunits to form alpha-leucine ester residues. The sequence is that of Leucine carboxyl methyltransferase 1 (LCMT1) from Bos taurus (Bovine).